Reading from the N-terminus, the 212-residue chain is ATP phosphoribosyltransferase (212 aa).

This sequence belongs to the ATP phosphoribosyltransferase family. Short subfamily. As to quaternary structure, heteromultimer composed of HisG and HisZ subunits.

Its subcellular location is the cytoplasm. The enzyme catalyses 1-(5-phospho-beta-D-ribosyl)-ATP + diphosphate = 5-phospho-alpha-D-ribose 1-diphosphate + ATP. It functions in the pathway amino-acid biosynthesis; L-histidine biosynthesis; L-histidine from 5-phospho-alpha-D-ribose 1-diphosphate: step 1/9. Functionally, catalyzes the condensation of ATP and 5-phosphoribose 1-diphosphate to form N'-(5'-phosphoribosyl)-ATP (PR-ATP). Has a crucial role in the pathway because the rate of histidine biosynthesis seems to be controlled primarily by regulation of HisG enzymatic activity. This chain is ATP phosphoribosyltransferase, found in Clostridium novyi (strain NT).